The following is a 167-amino-acid chain: Ion-translocating oxidoreductase complex subunit B (167 aa).

The tract at residues 1–22 is hydrophobic; it reads MITLIIFSFLSFLLGIILSFTA. The 4Fe-4S domain maps to 28–87; that stretch reads QEDPIVAIVNELLPQSQCAQCGYSGCYPYAKAIVENSEKINKCIPGGTDLISAISSVLSI. Residues cysteine 45, cysteine 48, cysteine 53, cysteine 70, cysteine 113, cysteine 116, cysteine 119, cysteine 123, cysteine 143, cysteine 146, cysteine 149, and cysteine 153 each contribute to the [4Fe-4S] cluster site. 4Fe-4S ferredoxin-type domains follow at residues 104-133 and 134-163; these read NTVL…GAPN and FIHT…IKKE.

This sequence belongs to the 4Fe4S bacterial-type ferredoxin family. RnfB subfamily. In terms of assembly, the complex is composed of six subunits: RnfA, RnfB, RnfC, RnfD, RnfE and RnfG. The cofactor is [4Fe-4S] cluster.

It localises to the cell inner membrane. Part of a membrane-bound complex that couples electron transfer with translocation of ions across the membrane. This chain is Ion-translocating oxidoreductase complex subunit B, found in Buchnera aphidicola subsp. Acyrthosiphon pisum (strain 5A).